Consider the following 409-residue polypeptide: Elongation factor Tu (409 aa).

A tr-type G domain is found at 10-214 (KPHVNIGTIG…AVDSYIPTPE (205 aa)). Residues 19 to 26 (GHVDHGKT) are G1. GTP is bound at residue 19–26 (GHVDHGKT). T26 contributes to the Mg(2+) binding site. The segment at 60–64 (GITIN) is G2. Residues 81-84 (DCPG) are G3. GTP-binding positions include 81 to 85 (DCPGH) and 136 to 139 (NKVD). Residues 136 to 139 (NKVD) form a G4 region. The segment at 174–176 (SGL) is G5.

Belongs to the TRAFAC class translation factor GTPase superfamily. Classic translation factor GTPase family. EF-Tu/EF-1A subfamily. As to quaternary structure, monomer.

Its subcellular location is the cytoplasm. It carries out the reaction GTP + H2O = GDP + phosphate + H(+). In terms of biological role, GTP hydrolase that promotes the GTP-dependent binding of aminoacyl-tRNA to the A-site of ribosomes during protein biosynthesis. The chain is Elongation factor Tu from Cyanothece sp. (strain PCC 7425 / ATCC 29141).